A 1202-amino-acid polypeptide reads, in one-letter code: DNA-directed RNA polymerase subunit beta (1202 aa).

The segment at 1154 to 1202 is disordered; the sequence is NMDEDDDEVVNVDALAKYAEEHKADDKKNEEENKSEATSTTTDDKTNQN. Basic and acidic residues predominate over residues 1171-1188; sequence YAEEHKADDKKNEEENKS.

This sequence belongs to the RNA polymerase beta chain family. The RNAP catalytic core consists of 2 alpha, 1 beta, 1 beta' and 1 omega subunit. When a sigma factor is associated with the core the holoenzyme is formed, which can initiate transcription.

The catalysed reaction is RNA(n) + a ribonucleoside 5'-triphosphate = RNA(n+1) + diphosphate. In terms of biological role, DNA-dependent RNA polymerase catalyzes the transcription of DNA into RNA using the four ribonucleoside triphosphates as substrates. This is DNA-directed RNA polymerase subunit beta from Limosilactobacillus reuteri (strain DSM 20016) (Lactobacillus reuteri).